The sequence spans 115 residues: MNLMLTLFTNATLASLLILIAFWLPQSYAYAEKVTPYECGFDPMGSARLPFSMKFFLVAITFLLFDLEIALLLPLPWAIQATNLNLVLFMALALITLLALSLAYEWIQKGLEWVE.

A run of 3 helical transmembrane segments spans residues 3–23, 55–75, and 87–107; these read LMLT…IAFW, FFLV…LLPL, and VLFM…YEWI.

The protein belongs to the complex I subunit 3 family. As to quaternary structure, core subunit of respiratory chain NADH dehydrogenase (Complex I) which is composed of 45 different subunits. Interacts with TMEM186. Interacts with TMEM242.

It is found in the mitochondrion inner membrane. It carries out the reaction a ubiquinone + NADH + 5 H(+)(in) = a ubiquinol + NAD(+) + 4 H(+)(out). Functionally, core subunit of the mitochondrial membrane respiratory chain NADH dehydrogenase (Complex I) which catalyzes electron transfer from NADH through the respiratory chain, using ubiquinone as an electron acceptor. Essential for the catalytic activity of complex I. The sequence is that of NADH-ubiquinone oxidoreductase chain 3 from Dugong dugon (Dugong).